The sequence spans 330 residues: MIVVTGAAGFIGSNLVRGLNRRGIQDIIAVDDLTEGDKFLNLVDCQIADYLDKDEFRRRVLAGSLPPLRAVLHQGACSDTTERNGRYMLDNNYRVTLELFEYCQAHAIPFLYASSAAVYGGSSVYVEDPTNERPLNVYGYSKLLFDQVLRTRMKSLTAQVVGLRYFNVYGPHEQHKGRMASVAFHNMNQFLAEGHVRLFAGWDGYADGGQSRDFISVEDVVAVNLHFLDNPGTSGIFNCGTGRAQPFNDVAAAVVNTLREERGEAALPLDKLVEQGLVRYIPFPDDLKGRYQSYTQADVTQLRAAGFAAPMRDVQTGVAEYVRYWRARKA.

Residues 10 to 11 (FI), 31 to 32 (DD), lysine 38, lysine 53, 74 to 78 (QGACS), and asparagine 91 each bind NADP(+). The active-site Proton acceptor is the tyrosine 138. Lysine 142 contributes to the NADP(+) binding site. Residue asparagine 167 participates in substrate binding. Valine 168 and lysine 176 together coordinate NADP(+). Lysine 176 acts as the Proton acceptor in catalysis. Residues arginine 178, histidine 185, 199-202 (FAGW), arginine 212, and tyrosine 291 contribute to the substrate site.

This sequence belongs to the NAD(P)-dependent epimerase/dehydratase family. HldD subfamily. Homopentamer. NADP(+) is required as a cofactor.

It catalyses the reaction ADP-D-glycero-beta-D-manno-heptose = ADP-L-glycero-beta-D-manno-heptose. It functions in the pathway nucleotide-sugar biosynthesis; ADP-L-glycero-beta-D-manno-heptose biosynthesis; ADP-L-glycero-beta-D-manno-heptose from D-glycero-beta-D-manno-heptose 7-phosphate: step 4/4. Its function is as follows. Catalyzes the interconversion between ADP-D-glycero-beta-D-manno-heptose and ADP-L-glycero-beta-D-manno-heptose via an epimerization at carbon 6 of the heptose. The chain is ADP-L-glycero-D-manno-heptose-6-epimerase from Bordetella petrii (strain ATCC BAA-461 / DSM 12804 / CCUG 43448).